A 511-amino-acid polypeptide reads, in one-letter code: Type 2 DNA topoisomerase 6 subunit B-like (511 aa).

Residues 398–485 (DSAQGTEDAP…RALAPGRASL (88 aa)) are disordered. Positions 408 to 422 (DNSSLELLADTSGQA) are enriched in polar residues. A compositionally biased stretch (low complexity) spans 440 to 451 (LRSARAPSPSEA). Residues 466–475 (RGREHREAHG) show a composition bias toward basic and acidic residues.

This sequence belongs to the TOP6B-like family. Heterotetramer of SPO11 and 2 TOP6BL chains. Interacts with SPO11. Detected in lung, spleen,colon and in skeletal muscle. Expressed in the ovaries, Fallopian tubes and uterus.

The protein resides in the chromosome. In terms of biological role, component of a topoisomerase 6 complex specifically required for meiotic recombination. Together with SPO11, mediates DNA cleavage that forms the double-strand breaks (DSB) that initiate meiotic recombination. The complex promotes relaxation of negative and positive supercoiled DNA and DNA decatenation through cleavage and ligation cycles. This Homo sapiens (Human) protein is Type 2 DNA topoisomerase 6 subunit B-like.